The chain runs to 337 residues: S-adenosylmethionine:tRNA ribosyltransferase-isomerase (337 aa).

It belongs to the QueA family. As to quaternary structure, monomer.

The protein localises to the cytoplasm. The catalysed reaction is 7-aminomethyl-7-carbaguanosine(34) in tRNA + S-adenosyl-L-methionine = epoxyqueuosine(34) in tRNA + adenine + L-methionine + 2 H(+). The protein operates within tRNA modification; tRNA-queuosine biosynthesis. Its function is as follows. Transfers and isomerizes the ribose moiety from AdoMet to the 7-aminomethyl group of 7-deazaguanine (preQ1-tRNA) to give epoxyqueuosine (oQ-tRNA). The chain is S-adenosylmethionine:tRNA ribosyltransferase-isomerase from Legionella pneumophila subsp. pneumophila (strain Philadelphia 1 / ATCC 33152 / DSM 7513).